A 310-amino-acid polypeptide reads, in one-letter code: Beta-ketoacyl-[acyl-carrier-protein] synthase III (310 aa).

Residues cysteine 112 and histidine 235 contribute to the active site. The segment at 236–240 (QANIR) is ACP-binding. The active site involves asparagine 265.

This sequence belongs to the thiolase-like superfamily. FabH family. Homodimer.

The protein resides in the cytoplasm. It carries out the reaction malonyl-[ACP] + acetyl-CoA + H(+) = 3-oxobutanoyl-[ACP] + CO2 + CoA. The protein operates within lipid metabolism; fatty acid biosynthesis. In terms of biological role, catalyzes the condensation reaction of fatty acid synthesis by the addition to an acyl acceptor of two carbons from malonyl-ACP. Catalyzes the first condensation reaction which initiates fatty acid synthesis and may therefore play a role in governing the total rate of fatty acid production. Possesses both acetoacetyl-ACP synthase and acetyl transacylase activities. Its substrate specificity determines the biosynthesis of branched-chain and/or straight-chain of fatty acids. The chain is Beta-ketoacyl-[acyl-carrier-protein] synthase III from Geobacillus kaustophilus (strain HTA426).